Here is a 252-residue protein sequence, read N- to C-terminus: Aspartate/glutamate leucyltransferase (252 aa).

The protein belongs to the R-transferase family. Bpt subfamily.

Its subcellular location is the cytoplasm. It catalyses the reaction N-terminal L-glutamyl-[protein] + L-leucyl-tRNA(Leu) = N-terminal L-leucyl-L-glutamyl-[protein] + tRNA(Leu) + H(+). The enzyme catalyses N-terminal L-aspartyl-[protein] + L-leucyl-tRNA(Leu) = N-terminal L-leucyl-L-aspartyl-[protein] + tRNA(Leu) + H(+). In terms of biological role, functions in the N-end rule pathway of protein degradation where it conjugates Leu from its aminoacyl-tRNA to the N-termini of proteins containing an N-terminal aspartate or glutamate. The polypeptide is Aspartate/glutamate leucyltransferase (Hyphomonas neptunium (strain ATCC 15444)).